The chain runs to 163 residues: Protein-export protein SecB (163 aa).

This sequence belongs to the SecB family. In terms of assembly, homotetramer, a dimer of dimers. One homotetramer interacts with 1 SecA dimer.

The protein localises to the cytoplasm. In terms of biological role, one of the proteins required for the normal export of preproteins out of the cell cytoplasm. It is a molecular chaperone that binds to a subset of precursor proteins, maintaining them in a translocation-competent state. It also specifically binds to its receptor SecA. This Brucella anthropi (strain ATCC 49188 / DSM 6882 / CCUG 24695 / JCM 21032 / LMG 3331 / NBRC 15819 / NCTC 12168 / Alc 37) (Ochrobactrum anthropi) protein is Protein-export protein SecB.